A 329-amino-acid chain; its full sequence is Cytosolic arginine sensor for mTORC1 subunit 2 (329 aa).

2 consecutive ACT domains span residues 72–140 (ADAT…HTLS) and 262–322 (ELWK…SALK).

This sequence belongs to the GATS family. In terms of assembly, forms homodimers and heterodimers with CASTOR1. Interacts with the GATOR2 complex which is composed of MIOS, SEC13, SEH1L, WDR24 and WDR59; the interaction is not regulated by arginine. As to expression, widely expressed.

The protein resides in the cytoplasm. It is found in the cytosol. In terms of biological role, functions as a negative regulator of the TORC1 signaling pathway through the GATOR complex. As part of homodimers or heterodimers with CASTOR1, directly binds and inhibits the GATOR subcomplex GATOR2 and thereby mTORC1. Does not directly bind arginine, but binding of arginine to CASTOR1 disrupts the interaction of CASTOR2-containing heterodimers with GATOR2 which can in turn activate mTORC1 and the TORC1 signaling pathway. The sequence is that of Cytosolic arginine sensor for mTORC1 subunit 2 from Homo sapiens (Human).